A 469-amino-acid chain; its full sequence is Pentatricopeptide repeat-containing protein At2g34370, mitochondrial (469 aa).

The N-terminal 65 residues, 1–65, are a transit peptide targeting the mitochondrion; the sequence is MVRLVCSRIL…QNRSFVQCRR (65 aa). PPR repeat units lie at residues 142–172, 173–207, 208–238, and 244–274; these read DARS…MPKR, NSET…GNKP, DKEI…MYRD, and SMED…MTVE. The type DYW motif stretch occupies residues 375-469; it reads DIGFVPATRV…NGVCSCKDYW (95 aa).

This sequence belongs to the PPR family. PCMP-H subfamily.

Its subcellular location is the mitochondrion. The polypeptide is Pentatricopeptide repeat-containing protein At2g34370, mitochondrial (PCMP-H25) (Arabidopsis thaliana (Mouse-ear cress)).